Consider the following 138-residue polypeptide: Putative nickel-responsive regulator (138 aa).

Residues His78, His89, His91, and Cys97 each contribute to the Ni(2+) site.

It belongs to the transcriptional regulatory CopG/NikR family. The cofactor is Ni(2+).

Transcriptional regulator. This is Putative nickel-responsive regulator from Pyrococcus abyssi (strain GE5 / Orsay).